The primary structure comprises 1105 residues: SWI/SNF complex subunit SMARCC1 (1105 aa).

Ala2 bears the N-acetylalanine mark. Residues 28–302 (LAVYRRKDGG…PVSFRQRIST (275 aa)) are marR-like, BRCT and chromo domains module. One can recognise a MarR-like domain in the interval 38–164 (PATKFWESPE…IEKTLVQNNC (127 aa)). Residues 168–211 (PNIYLIPDIDLKLANKLKDIIKRHQGTFTDEKSKASHHIYPYSS) form the BRCT; N-terminus domain. Lys179 participates in a covalent cross-link: Glycyl lysine isopeptide (Lys-Gly) (interchain with G-Cter in SUMO2). One can recognise a Chromo domain in the interval 217–245 (EWLRPVMRKEKQVLVHWGFYPDSYDTWVH). The region spanning 261–285 (KPWKVHVKWILDTDIFNEWMNEEDY) is the BRCT; C-terminus domain. The tract at residues 296–439 (FRQRISTKNE…DQSRSVDLGE (144 aa)) is disordered. Basic and acidic residues predominate over residues 302 to 318 (TKNEEPVRSPERRDRKA). Residues Ser310, Ser328, and Ser330 each carry the phosphoserine modification. Thr335 is subject to Phosphothreonine. An N6-acetyllysine mark is found at Lys345 and Lys346. Residue Ser350 is modified to Phosphoserine. The residue at position 354 (Lys354) is an N6-acetyllysine. At Ser357 the chain carries Phosphoserine. Position 359 is an N6-acetyllysine; alternate (Lys359). Lys359 participates in a covalent cross-link: Glycyl lysine isopeptide (Lys-Gly) (interchain with G-Cter in SUMO2); alternate. Thr398 is modified (phosphothreonine). One can recognise an SWIRM domain in the interval 449–546 (IIIPSYASWF…YQVDPESRPM (98 aa)). Ser573 carries the post-translational modification Phosphoserine. Residue Lys592 forms a Glycyl lysine isopeptide (Lys-Gly) (interchain with G-Cter in SUMO2) linkage. One can recognise an SANT domain in the interval 618–669 (SAGREWTEQETLLLLEALEMYKDDWNKVSEHVGSRTQDECILHFLRLPIEDP). Lys739 participates in a covalent cross-link: Glycyl lysine isopeptide (Lys-Gly) (interchain with G-Cter in SUMO2). The segment at 745–860 (ARASGKVDPT…DTGKKKVEHE (116 aa)) is disordered. Acidic residues predominate over residues 776–785 (AEEEKMEADP). Over residues 789 to 860 (QPEKAENKVE…DTGKKKVEHE (72 aa)) the composition is skewed to basic and acidic residues. Residue Lys796 forms a Glycyl lysine isopeptide (Lys-Gly) (interchain with G-Cter in SUMO2) linkage. A phosphoserine mark is found at Ser822 and Ser825. Residues Lys829 and Lys856 each participate in a glycyl lysine isopeptide (Lys-Gly) (interchain with G-Cter in SUMO2) cross-link. The stretch at 914 to 946 (FEELETIMDREKEALEQQRQQLLTERQNFHMEQ) forms a coiled coil. Lys948 carries the post-translational modification N6-acetyllysine. Disordered stretches follow at residues 956–1028 (QQME…PGQH) and 1041–1105 (IHPS…SAAP). A compositionally biased stretch (low complexity) spans 957–993 (QMEQQQHGQNPQQAHQHSGGPGLAPLGAAGHPGMMPH). Composition is skewed to pro residues over residues 994–1017 (QQPP…PGQI) and 1048–1057 (PTPPGMPPMP). Position 1064 is an asymmetric dimethylarginine (Arg1064). The segment covering 1073–1105 (MYPPPPQQQPPPPPPADGVPPPPAPGPPASAAP) has biased composition (pro residues).

It belongs to the SMARCC family. As to quaternary structure, component of the multiprotein chromatin-remodeling complexes SWI/SNF: SWI/SNF-A (BAF), SWI/SNF-B (PBAF) and related complexes. The canonical complex contains a catalytic subunit (either SMARCA4/BRG1/BAF190A or SMARCA2/BRM/BAF190B) and at least SMARCE1, ACTL6A/BAF53, SMARCC1/BAF155, SMARCC2/BAF170, and SMARCB1/SNF5/BAF47. Other subunits specific to each of the complexes may also be present permitting several possible combinations developmentally and tissue specific. Component of the BAF complex, which includes at least actin (ACTB), ARID1A/BAF250A, ARID1B/BAF250B, SMARCA2/BRM, SMARCA4/BRG1, ACTL6A/BAF53, ACTL6B/BAF53B, SMARCE1/BAF57, SMARCC1/BAF155, SMARCC2/BAF170, SMARCB1/SNF5/INI1, and one or more SMARCD1/BAF60A, SMARCD2/BAF60B, or SMARCD3/BAF60C. In muscle cells, the BAF complex also contains DPF3. Component of neural progenitors-specific chromatin remodeling complex (npBAF complex) composed of at least, ARID1A/BAF250A or ARID1B/BAF250B, SMARCD1/BAF60A, SMARCD3/BAF60C, SMARCA2/BRM/BAF190B, SMARCA4/BRG1/BAF190A, SMARCB1/BAF47, SMARCC1/BAF155, SMARCE1/BAF57, SMARCC2/BAF170, PHF10/BAF45A, ACTL6A/BAF53A and actin. Component of neuron-specific chromatin remodeling complex (nBAF complex) composed of at least, ARID1A/BAF250A or ARID1B/BAF250B, SMARCD1/BAF60A, SMARCD3/BAF60C, SMARCA2/BRM/BAF190B, SMARCA4/BRG1/BAF190A, SMARCB1/BAF47, SMARCC1/BAF155, SMARCE1/BAF57, SMARCC2/BAF170, DPF1/BAF45B, DPF3/BAF45C, ACTL6B/BAF53B and actin. Component of the SWI/SNF-B (PBAF) chromatin remodeling complex, at least composed of SMARCA4/BRG1, SMARCB1/BAF47/SNF5, ACTL6A/BAF53A or ACTL6B/BAF53B, SMARCE1/BAF57, SMARCD1/BAF60A, SMARCD2/BAF60B, perhaps SMARCD3/BAF60C, SMARCC1/BAF155, SMARCC2/BAF170, PBRM1/BAF180, ARID2/BAF200 and actin. Component of SWI/SNF (GBAF) subcomplex, which includes at least BICRA or BICRAL (mutually exclusive), BRD9, SS18, SMARCA2/BRM, SMARCA4/BRG1/BAF190A, ACTL6A/BAF53, SMARCC1/BAF155, and SMARCD1/BAF60A. May also interact with the SIN3A histone deacetylase transcription repressor complex in conjunction with SMARCA2 and SMARCA4. The minimal complex composed of SMARCC1 and SMARCA4 seems to be able to associate with cyclin such as CCNE1 or transcription factors such as KLF1 or GATA1. Interacts with NR3C1 and SMARD1. Interacts with TRIP12; leading to disrupt interaction between TRIP12 and SMARCE1 and prevent SMARCE1 ubiquitination. Interacts with CEBPB (when not methylated). Interacts with KDM6B. Interacts with MKKS; the interaction takes place predominantly in the cytoplasm and may modulate SMARCC1 location. Interacts with DPF2. Interacts with PRDM1/BLIMP1. Interacts with DPF3a (isoform 2 of DPF3/BAF45C) and with HDGFL2 in a DPF3a-dependent manner. Post-translationally, phosphorylated on undefined residues at the G2/M transition by ERK1 and other kinases. This may contribute to cell cycle specific inactivation of remodeling complexes containing the phosphorylated protein. In terms of tissue distribution, expressed in brain, heart, muscle, placenta, lung, liver, muscle, kidney and pancreas.

Its subcellular location is the nucleus. The protein resides in the cytoplasm. Functionally, involved in transcriptional activation and repression of select genes by chromatin remodeling (alteration of DNA-nucleosome topology). Component of SWI/SNF chromatin remodeling complexes that carry out key enzymatic activities, changing chromatin structure by altering DNA-histone contacts within a nucleosome in an ATP-dependent manner. May stimulate the ATPase activity of the catalytic subunit of the complex. Belongs to the neural progenitors-specific chromatin remodeling complex (npBAF complex) and the neuron-specific chromatin remodeling complex (nBAF complex). During neural development a switch from a stem/progenitor to a postmitotic chromatin remodeling mechanism occurs as neurons exit the cell cycle and become committed to their adult state. The transition from proliferating neural stem/progenitor cells to postmitotic neurons requires a switch in subunit composition of the npBAF and nBAF complexes. As neural progenitors exit mitosis and differentiate into neurons, npBAF complexes which contain ACTL6A/BAF53A and PHF10/BAF45A, are exchanged for homologous alternative ACTL6B/BAF53B and DPF1/BAF45B or DPF3/BAF45C subunits in neuron-specific complexes (nBAF). The npBAF complex is essential for the self-renewal/proliferative capacity of the multipotent neural stem cells. The nBAF complex along with CREST plays a role regulating the activity of genes essential for dendrite growth. In Homo sapiens (Human), this protein is SWI/SNF complex subunit SMARCC1.